A 305-amino-acid polypeptide reads, in one-letter code: Porphobilinogen deaminase (305 aa).

Residue cysteine 241 is modified to S-(dipyrrolylmethanemethyl)cysteine.

It belongs to the HMBS family. As to quaternary structure, monomer. Dipyrromethane serves as cofactor.

The catalysed reaction is 4 porphobilinogen + H2O = hydroxymethylbilane + 4 NH4(+). Its pathway is porphyrin-containing compound metabolism; protoporphyrin-IX biosynthesis; coproporphyrinogen-III from 5-aminolevulinate: step 2/4. In terms of biological role, tetrapolymerization of the monopyrrole PBG into the hydroxymethylbilane pre-uroporphyrinogen in several discrete steps. This is Porphobilinogen deaminase from Exiguobacterium sp. (strain ATCC BAA-1283 / AT1b).